Reading from the N-terminus, the 453-residue chain is Phenylalanine-4-hydroxylase (453 aa).

The residue at position 2 (alanine 2) is an N-acetylalanine. Serine 16 bears the Phosphoserine mark. Residues 36 to 114 form the ACT domain; sequence SLIFSLKEEV…TVHELSRDKE (79 aa). Residues histidine 285, histidine 290, and glutamate 330 each coordinate Fe cation.

The protein belongs to the biopterin-dependent aromatic amino acid hydroxylase family. As to quaternary structure, homodimer and homotetramer. The cofactor is Fe(2+). In terms of processing, phosphorylation at Ser-16 increases basal activity and facilitates activation by the substrate phenylalanine.

It catalyses the reaction (6R)-L-erythro-5,6,7,8-tetrahydrobiopterin + L-phenylalanine + O2 = (4aS,6R)-4a-hydroxy-L-erythro-5,6,7,8-tetrahydrobiopterin + L-tyrosine. It functions in the pathway amino-acid degradation; L-phenylalanine degradation; acetoacetate and fumarate from L-phenylalanine: step 1/6. N-terminal region of PAH is thought to contain allosteric binding sites for phenylalanine and to constitute an 'inhibitory' domain that regulates the activity of a catalytic domain in the C-terminal portion of the molecule. Its function is as follows. Catalyzes the hydroxylation of L-phenylalanine to L-tyrosine. This chain is Phenylalanine-4-hydroxylase (Pah), found in Mus musculus (Mouse).